Reading from the N-terminus, the 411-residue chain is Trigger factor (411 aa).

The region spanning 162–240 is the PPIase FKBP-type domain; sequence EDLVVIDYTT…IKEVKRRQNI (79 aa).

Belongs to the FKBP-type PPIase family. Tig subfamily.

It localises to the cytoplasm. It carries out the reaction [protein]-peptidylproline (omega=180) = [protein]-peptidylproline (omega=0). Functionally, involved in protein export. Acts as a chaperone by maintaining the newly synthesized protein in an open conformation. Functions as a peptidyl-prolyl cis-trans isomerase. The sequence is that of Trigger factor from Thermodesulfovibrio yellowstonii (strain ATCC 51303 / DSM 11347 / YP87).